A 357-amino-acid polypeptide reads, in one-letter code: sn-glycerol-3-phosphate import ATP-binding protein UgpC (357 aa).

Residues 4–235 (LKLQAVTKSY…PASLFVASFI (232 aa)) enclose the ABC transporter domain. 37–44 (GPSGCGKS) contributes to the ATP binding site.

Belongs to the ABC transporter superfamily. sn-glycerol-3-phosphate importer (TC 3.A.1.1.3) family. The complex is composed of two ATP-binding proteins (UgpC), two transmembrane proteins (UgpA and UgpE) and a solute-binding protein (UgpB).

It is found in the cell inner membrane. It catalyses the reaction sn-glycerol 3-phosphate(out) + ATP + H2O = sn-glycerol 3-phosphate(in) + ADP + phosphate + H(+). Functionally, part of the ABC transporter complex UgpBAEC involved in sn-glycerol-3-phosphate (G3P) import. Responsible for energy coupling to the transport system. This is sn-glycerol-3-phosphate import ATP-binding protein UgpC from Yersinia pseudotuberculosis serotype I (strain IP32953).